Here is a 385-residue protein sequence, read N- to C-terminus: Photoreceptor ankyrin repeat protein (385 aa).

ANK repeat units follow at residues 17–46 (CNLK…SPEE), 53–83 (NGRT…DVNQ), 87–116 (DGNT…GLDL), 122–151 (RGLT…DLSS), and 156–190 (RGKT…QLSL). Residues 270–385 (LGTRGKSVPE…GGLGQAGGSK (116 aa)) form a disordered region. Over residues 284–297 (APPPPPEPHPPQQV) the composition is skewed to pro residues. Residues 304–326 (APNQSPQSMFSQWLQSRDSTRSQ) are compositionally biased toward polar residues. Basic and acidic residues predominate over residues 361 to 373 (FQERKKKEEETEP). The span at 374-385 (RGGGLGQAGGSK) shows a compositional bias: gly residues.

Isoform 1: Expressed predominantly in the retina. Isoform 2: Expressed in the pineal gland.

It localises to the cytoplasm. Its subcellular location is the cytosol. The protein resides in the nucleus. Functionally, acts as a transcriptional repressor for CRX-activated photoreceptor gene regulation. This chain is Photoreceptor ankyrin repeat protein, found in Mus musculus (Mouse).